Here is a 795-residue protein sequence, read N- to C-terminus: Protein espinas (795 aa).

The disordered stretch occupies residues 30–96 (GTGLTFPPHR…FVSPLQRRHC (67 aa)). Positions 52 to 66 (ASMSSNVASTATSSN) are enriched in low complexity. One can recognise a PET domain in the interval 135-243 (LDFQRNSQSD…AVRLLSDERP (109 aa)). 3 LIM zinc-binding domains span residues 242-306 (RPCK…ETQK), 307-367 (PRCS…MFAE), and 368-430 (YCDY…GEPP). 2 disordered regions span residues 427–487 (GEPP…GSAG) and 616–684 (NRNT…EMQI). Basic and acidic residues-rich tracts occupy residues 459–471 (RSGD…ESSR) and 637–649 (LDNR…RFHS). Over residues 650-662 (VQDTMSRSKSYTD) the composition is skewed to polar residues. Over residues 666-675 (ARRRRRRRNQ) the composition is skewed to basic residues.

It belongs to the prickle / espinas / testin family.

The chain is Protein espinas from Drosophila pseudoobscura pseudoobscura (Fruit fly).